A 167-amino-acid chain; its full sequence is Endoribonuclease YbeY (167 aa).

Zn(2+) contacts are provided by histidine 131, histidine 135, and histidine 141.

The protein belongs to the endoribonuclease YbeY family. The cofactor is Zn(2+).

The protein localises to the cytoplasm. In terms of biological role, single strand-specific metallo-endoribonuclease involved in late-stage 70S ribosome quality control and in maturation of the 3' terminus of the 16S rRNA. This Rickettsia conorii (strain ATCC VR-613 / Malish 7) protein is Endoribonuclease YbeY.